Consider the following 117-residue polypeptide: MPWALLLLTLLTHSAVSVVQAGLTQPPSVSKGLRQTATLTCTGNSNIVGNQGAAWLQQHQGHPPKLLSYRNNNRPSGISERFSASRSGNTASLTITGLQPEDEADYYCSALDSSLSA.

Positions 1–21 (MPWALLLLTLLTHSAVSVVQA) are cleaved as a signal peptide. The framework-1 stretch occupies residues 20-43 (QAGLTQPPSVSKGLRQTATLTCTG). Residues 22–117 (GLTQPPSVSK…CSALDSSLSA (96 aa)) enclose the Ig-like domain. The cysteines at positions 41 and 108 are disulfide-linked. The tract at residues 44–52 (NSNIVGNQG) is complementarity-determining-1. Positions 53-69 (AAWLQQHQGHPPKLLSY) are framework-2. The complementarity-determining-2 stretch occupies residues 70–72 (RNN). A framework-3 region spans residues 73–108 (NRPSGISERFSASRSGNTASLTITGLQPEDEADYYC). The complementarity-determining-3 stretch occupies residues 109 to 117 (SALDSSLSA).

As to quaternary structure, immunoglobulins are composed of two identical heavy chains and two identical light chains; disulfide-linked.

It is found in the secreted. Its subcellular location is the cell membrane. V region of the variable domain of immunoglobulin light chains that participates in the antigen recognition. Immunoglobulins, also known as antibodies, are membrane-bound or secreted glycoproteins produced by B lymphocytes. In the recognition phase of humoral immunity, the membrane-bound immunoglobulins serve as receptors which, upon binding of a specific antigen, trigger the clonal expansion and differentiation of B lymphocytes into immunoglobulins-secreting plasma cells. Secreted immunoglobulins mediate the effector phase of humoral immunity, which results in the elimination of bound antigens. The antigen binding site is formed by the variable domain of one heavy chain, together with that of its associated light chain. Thus, each immunoglobulin has two antigen binding sites with remarkable affinity for a particular antigen. The variable domains are assembled by a process called V-(D)-J rearrangement and can then be subjected to somatic hypermutations which, after exposure to antigen and selection, allow affinity maturation for a particular antigen. This chain is Immunoglobulin lambda variable 10-54, found in Homo sapiens (Human).